Consider the following 551-residue polypeptide: Urocanate hydratase (551 aa).

Residues 48–49 (GG), Q126, 172–174 (GMG), E192, R197, 238–239 (NA), 259–263 (QTSAH), 269–270 (YI), and Y318 each bind NAD(+). Residue C406 is part of the active site. G488 lines the NAD(+) pocket.

This sequence belongs to the urocanase family. NAD(+) is required as a cofactor.

Its subcellular location is the cytoplasm. The enzyme catalyses 4-imidazolone-5-propanoate = trans-urocanate + H2O. It participates in amino-acid degradation; L-histidine degradation into L-glutamate; N-formimidoyl-L-glutamate from L-histidine: step 2/3. In terms of biological role, catalyzes the conversion of urocanate to 4-imidazolone-5-propionate. The polypeptide is Urocanate hydratase (Symbiobacterium thermophilum (strain DSM 24528 / JCM 14929 / IAM 14863 / T)).